The following is a 593-amino-acid chain: Calnexin (593 aa).

An N-terminal signal peptide occupies residues 1–20; the sequence is MEGKWLLCMLLVLGTTIVQA. Topologically, residues 21 to 482 are lumenal; the sequence is HEGHDDDMID…QMIEAAEERP (462 aa). Ser-75 and Asp-118 together coordinate Ca(2+). Lys-138 carries the N6-acetyllysine modification. A disulfide bridge links Cys-161 with Cys-195. An alpha-D-glucoside-binding residues include Tyr-165, Lys-167, Tyr-186, and Asp-193. A disordered region spans residues 261-346; it reads GNLLNDMTPP…AEKPEDWDED (86 aa). A p domain (Extended arm) region spans residues 277 to 410; the sequence is IEDPEDQKPE…RKIPNPDFFE (134 aa). Tandem repeats lie at residues 279-290, 296-307, 315-326, 334-345, and 349-359. 4 X approximate repeats stretches follow at residues 279-345 and 349-406; these read DPED…DWDE and GEWE…IPNP. A compositionally biased stretch (basic and acidic residues) spans 282–320; it reads DQKPEDWDERPKIPDPDAVKPDDWNEDAPAKIPDEEATK. The span at 324-346 shows a compositional bias: acidic residues; that stretch reads WLDDEPEYVPDPDAEKPEDWDED. The interval 327–360 is interaction with PPIB; sequence DEPEYVPDPDAEKPEDWDEDMDGEWEAPQIANPK. A disulfide bond links Cys-361 and Cys-367. 3 repeat units span residues 368–378, 382–392, and 396–406. Glu-426 provides a ligand contact to an alpha-D-glucoside. Asp-437 serves as a coordination point for Ca(2+). A helical transmembrane segment spans residues 483–503; the sequence is WLWVVYVLTVALPVFLVILFC. 2 S-palmitoyl cysteine lipidation sites follow: Cys-503 and Cys-504. Residues 504–593 are Cytoplasmic-facing; the sequence is CSGKKQSSPV…SPRNRKPRRE (90 aa). Residues 504–593 form a sufficient to mediate interaction with SGIP1 region; it reads CSGKKQSSPV…SPRNRKPRRE (90 aa). The interval 511-593 is disordered; the sequence is SPVEYKKTDA…SPRNRKPRRE (83 aa). Residues 526 to 548 show a composition bias toward acidic residues; that stretch reads KEEEEEKEEEKDKGDEEEEGEEK. Ser-555 bears the Phosphoserine mark. Thr-563 is modified (phosphothreonine). A Phosphoserine; by MAPK3 modification is found at Ser-565. Residue Ser-584 is modified to Phosphoserine.

It belongs to the calreticulin family. In terms of assembly, interacts with MAPK3/ERK1. Interacts with KCNH2. Associates with ribosomes. Interacts with SGIP1; involved in negative regulation of endocytosis. The palmitoylated form interacts with the ribosome-translocon complex component SSR1, promoting efficient folding of glycoproteins. Interacts with SERPINA2P/SERPINA2 and with the S and Z variants of SERPINA1. Interacts with PPIB. Interacts with ZNRF4. Interacts with SMIM22. Interacts with TMX2. Interacts with TMEM35A/NACHO and CHRNA7. Interacts with reticulophagy regulators RETREG2 and RETREG3. Interacts with DNM1L; may form part of a larger protein complex at the ER-mitochondrial interface during mitochondrial fission. Interacts with ADAM7. Phosphorylated at Ser-565 by MAPK3/ERK1. Phosphorylation by MAPK3/ERK1 increases its association with ribosomes. In terms of processing, palmitoylation by DHHC6 leads to the preferential localization to the perinuclear rough ER. It mediates the association of calnexin with the ribosome-translocon complex (RTC) which is required for efficient folding of glycosylated proteins. Post-translationally, ubiquitinated, leading to proteasomal degradation. Probably ubiquitinated by ZNRF4.

Its subcellular location is the endoplasmic reticulum membrane. The protein localises to the mitochondrion membrane. The protein resides in the melanosome membrane. Functionally, calcium-binding protein that interacts with newly synthesized monoglucosylated glycoproteins in the endoplasmic reticulum. It may act in assisting protein assembly and/or in the retention within the ER of unassembled protein subunits. It seems to play a major role in the quality control apparatus of the ER by the retention of incorrectly folded proteins. Associated with partial T-cell antigen receptor complexes that escape the ER of immature thymocytes, it may function as a signaling complex regulating thymocyte maturation. Additionally it may play a role in receptor-mediated endocytosis at the synapse. This chain is Calnexin (CANX), found in Canis lupus familiaris (Dog).